The sequence spans 476 residues: Zinc finger CCCH domain-containing protein 6 (476 aa).

Over residues 1–10 (MEQPHAAAAA) the composition is skewed to low complexity. The tract at residues 1 to 57 (MEQPHAAAAAAGGGEGEGGASPDTGLEGPMWRMGLGGGGGGGGGGGGGDGDAAGRLP) is disordered. The segment covering 34-51 (GLGGGGGGGGGGGGGDGD) has biased composition (gly residues). C3H1-type zinc fingers lie at residues 59–87 (RPGE…HPRD), 108–136 (RAGQ…HPKQ), and 153–181 (RLGE…HPEF). Polar residues predominate over residues 290–301 (SSTGQSSNNQQE). Residues 290–309 (SSTGQSSNNQQEHGFPERPG) form a disordered region. C3H1-type zinc fingers lie at residues 307–335 (RPGQ…HPRE) and 353–381 (RPGA…HPMG). The tract at residues 456-476 (TMMRAQTNTTSGGSSSPGGGR) is disordered.

It is found in the nucleus. This chain is Zinc finger CCCH domain-containing protein 6, found in Oryza sativa subsp. japonica (Rice).